The chain runs to 277 residues: Bis(5'-nucleosyl)-tetraphosphatase, symmetrical (277 aa).

This sequence belongs to the Ap4A hydrolase family.

The catalysed reaction is P(1),P(4)-bis(5'-adenosyl) tetraphosphate + H2O = 2 ADP + 2 H(+). Its function is as follows. Hydrolyzes diadenosine 5',5'''-P1,P4-tetraphosphate to yield ADP. This is Bis(5'-nucleosyl)-tetraphosphatase, symmetrical from Bordetella pertussis (strain Tohama I / ATCC BAA-589 / NCTC 13251).